Consider the following 316-residue polypeptide: Alkaline ceramidase YPC1 (316 aa).

Residues 1-36 are Lumenal-facing; sequence MGIFRWNYPESSVPGVWGETTSTIDWCEENYVVSPY. C27 and C219 are disulfide-bonded. The stretch at 37–57 is an intramembrane region; that stretch reads IAEWSNTLTNSVFILSAIYTT. Residues 58 to 68 lie on the Lumenal side of the membrane; that stretch reads YSAYKNKLEKR. An intramembrane segment occupies 69-89; that stretch reads FLLIGFGYGLVGVGSWLFHMT. Over 90-93 the chain is Lumenal; that stretch reads LKYR. Residues 94 to 114 form a helical membrane-spanning segment; sequence FQLLDELPMIYAMCIPTWSLV. Residues 115–135 are Cytoplasmic-facing; sequence CEAKEALLNGDNHKKVPLFEQ. The helical transmembrane segment at 136-156 threads the bilayer; that stretch reads IFIGVIIGLAVTTASILYVIY. The Lumenal segment spans residues 157–160; it reads KNVD. An intramembrane segment occupies 161-181; it reads IHQILFGVQIVVVAATAGSLT. Residues 182 to 195 are Lumenal-facing; it reads YRYVHDPLAKRNLK. Residues 196 to 216 lie within the membrane without spanning it; the sequence is ASMALGAILFLSGYISWLLDI. Residues 217–228 are Lumenal-facing; it reads HYCSFWVHVRRS. Residues 229–249 traverse the membrane as a helical segment; sequence ILALPLGVLLEPHGWWHILTG. The Cytoplasmic segment spans residues 250–316; sequence MGIYFYIVSL…DQSIEVKKEK (67 aa).

Belongs to the alkaline ceramidase family.

The protein localises to the endoplasmic reticulum membrane. The catalysed reaction is N-hexanoyl-sphinganine + H2O = hexanoate + sphinganine. It carries out the reaction sphinganine + hexadecanoate = N-hexadecanoylsphinganine + H2O. The enzyme catalyses N-hexadecanoyl-(4R)-hydroxysphinganine + H2O = (4R)-hydroxysphinganine + hexadecanoate. It catalyses the reaction N-hexadecanoylsphing-4-enine + H2O = sphing-4-enine + hexadecanoate. The catalysed reaction is an N-acyl-(4R)-4-hydroxysphinganine + H2O = (4R)-hydroxysphinganine + a fatty acid. Alkaline ceramidase that hydrolyzes phytoceramide and also dihydroceramide into phytosphingosine or dihydrosphingosine. Prefers phytoceramide. Also has reverse activity as acyl-CoA-independent ceramide synthase, catalyzing synthesis of phytoceramide and dihydroceramide from palmitic acid and phytosphingosine or dihydrosphingosine. Is not responsible for the breakdown of unsaturated ceramide. Preferentially uses very long chain fatty acids (C-24 and C-26) in vivo compared to C-16 in vitro. The chain is Alkaline ceramidase YPC1 (YPC1) from Saccharomyces cerevisiae (strain ATCC 204508 / S288c) (Baker's yeast).